Consider the following 219-residue polypeptide: U-scoloptoxin(11)-Sm7a (219 aa).

Residues 1–15 (MYLFLMINYFVLANS) form the signal peptide.

This sequence belongs to the scoloptoxin-11 family. In terms of processing, contains 8 disulfide bonds. Expressed by the venom gland.

The protein localises to the secreted. This chain is U-scoloptoxin(11)-Sm7a, found in Scolopendra morsitans (Tanzanian blue ringleg centipede).